Consider the following 143-residue polypeptide: Small ribosomal subunit protein uS12 (143 aa).

Pro62 carries the hydroxyproline modification.

This sequence belongs to the universal ribosomal protein uS12 family. Component of the 40S small ribosomal subunit.

The protein resides in the cytoplasm. Its subcellular location is the cytosol. It is found in the rough endoplasmic reticulum. This is Small ribosomal subunit protein uS12 (rps-23) from Caenorhabditis elegans.